Consider the following 404-residue polypeptide: MNVLVINSGSSSIKYQLIDMTTEKALCSGLVERIGEGMGKLTHKIKPDTDAEEKIVLEQAFANHVEGMKKVVDLITDADKGVIADKGEIYAVGHRVLLGGEEIKQSVKIDEWAKGIIRDYIPLGPLHNPANLAGIEVAEELFPHAPSVGVFDTEFHQTMPKKAYLYPLPYDLYKTLRIRRYGFHGTSHRYITKKTAEFLGKPLDELNIITCHLGNGCSMAAVKNGRCVDTTMGITPLEGLMMGTRCGDIDPALVPFLMEKKGWSGAEIDTVMNKQSGLKGICGMNDMRDIHAAREKGDEMAELAFQMFVYRIRKYIGSFAVVVGKLDAIVFTAGIGENDDLVRAAVCKDMDILGIDIDEAVNAKRSGQARHIGKPGQRVPVLVVPTNEELEIAQTTVAVLNGKN.

N7 is a Mg(2+) binding site. K14 is a binding site for ATP. Substrate is bound at residue R95. D152 serves as the catalytic Proton donor/acceptor. Residues 212–216 (HLGNG), 286–288 (DMR), and 334–338 (GIGEN) contribute to the ATP site. Residue E388 coordinates Mg(2+).

It belongs to the acetokinase family. In terms of assembly, homodimer. The cofactor is Mg(2+). It depends on Mn(2+) as a cofactor.

The protein localises to the cytoplasm. It carries out the reaction acetate + ATP = acetyl phosphate + ADP. It participates in metabolic intermediate biosynthesis; acetyl-CoA biosynthesis; acetyl-CoA from acetate: step 1/2. Functionally, catalyzes the formation of acetyl phosphate from acetate and ATP. Can also catalyze the reverse reaction. The protein is Acetate kinase of Nitratidesulfovibrio vulgaris (strain DSM 19637 / Miyazaki F) (Desulfovibrio vulgaris).